We begin with the raw amino-acid sequence, 885 residues long: Probable alpha-glucosidase Os06g0675700 (885 aa).

Residues 1 to 33 (MMGSPPAPPARRLGALAVFLLALFLAAPWGVDC) form the signal peptide. Residues Asn195, Asn378, and Asn397 are each glycosylated (N-linked (GlcNAc...) asparagine). Catalysis depends on residues Asp443 and Glu446. 2 N-linked (GlcNAc...) asparagine glycosylation sites follow: Asn467 and Asn477. Catalysis depends on Asp540, which acts as the Proton donor. Asn576 and Asn844 each carry an N-linked (GlcNAc...) asparagine glycan.

This sequence belongs to the glycosyl hydrolase 31 family.

It catalyses the reaction Hydrolysis of terminal, non-reducing (1-&gt;4)-linked alpha-D-glucose residues with release of alpha-D-glucose.. This chain is Probable alpha-glucosidase Os06g0675700, found in Oryza sativa subsp. japonica (Rice).